A 258-amino-acid chain; its full sequence is ADP-ribose glycohydrolase MACROD1 (258 aa).

An N6-succinyllysine mark is found at Lys29, Lys36, and Lys62. Lys71 participates in a covalent cross-link: Glycyl lysine isopeptide (Lys-Gly) (interchain with G-Cter in SUMO2). Residues 74–255 form the Macro domain; that stretch reads NPKYKKDKQL…IYQERLPHYF (182 aa). 92–94 contributes to the substrate binding site; the sequence is GDI. Lys96 is subject to N6-acetyllysine. Substrate is bound by residues 105–107, 112–117, 200–206, and Phe239; these read AAN, GGGGVD, and ISTGVFG.

This sequence belongs to the MacroD-type family. MacroD1/2-like subfamily. In terms of assembly, interacts with ESR1; Interacts in a manner that is estrogen independent but is enhanced by estrogen. Interacts (via macro domain) with AR.

It localises to the nucleus. The enzyme catalyses 3''-O-acetyl-ADP-D-ribose + H2O = ADP-D-ribose + acetate + H(+). It carries out the reaction 2''-O-acetyl-ADP-D-ribose + H2O = ADP-D-ribose + acetate + H(+). It catalyses the reaction 4-O-(ADP-D-ribosyl)-L-aspartyl-[protein] + H2O = L-aspartyl-[protein] + ADP-D-ribose + H(+). The catalysed reaction is 5-O-(ADP-D-ribosyl)-L-glutamyl-[protein] + H2O = L-glutamyl-[protein] + ADP-D-ribose + H(+). The enzyme catalyses alpha-NAD(+) + H2O = ADP-D-ribose + nicotinamide + H(+). With respect to regulation, subject to competitive inhibition by the product ADP-ribose. Removes ADP-ribose from aspartate and glutamate residues in proteins bearing a single ADP-ribose moiety. Inactive towards proteins bearing poly-ADP-ribose. Deacetylates O-acetyl-ADP ribose, a signaling molecule generated by the deacetylation of acetylated lysine residues in histones and other proteins. Plays a role in estrogen signaling. Binds to androgen receptor (AR) and amplifies the transactivation function of AR in response to androgen. May play an important role in carcinogenesis and/or progression of hormone-dependent cancers by feed-forward mechanism that activates ESR1 transactivation. Could be an ESR1 coactivator, providing a positive feedback regulatory loop for ESR1 signal transduction. Could be involved in invasive growth by down-regulating CDH1 in endometrial cancer cells. Enhances ESR1-mediated transcription activity. The protein is ADP-ribose glycohydrolase MACROD1 (Macrod1) of Rattus norvegicus (Rat).